The chain runs to 371 residues: Maltose/maltodextrin import ATP-binding protein MalK (371 aa).

The 231-residue stretch at 4 to 234 (VTLKNVCKAY…PENRFVAGFI (231 aa)) folds into the ABC transporter domain. 36–43 (GPSGCGKS) is an ATP binding site.

This sequence belongs to the ABC transporter superfamily. Maltooligosaccharide importer (TC 3.A.1.1.1) family. The complex is composed of two ATP-binding proteins (MalK), two transmembrane proteins (MalG and MalK) and a solute-binding protein (MalE).

It localises to the cell inner membrane. It carries out the reaction D-maltose(out) + ATP + H2O = D-maltose(in) + ADP + phosphate + H(+). Part of the ABC transporter complex MalEFGK involved in maltose/maltodextrin import. Responsible for energy coupling to the transport system. The polypeptide is Maltose/maltodextrin import ATP-binding protein MalK (Vibrio vulnificus (strain CMCP6)).